The chain runs to 215 residues: Small ribosomal subunit protein uS3 (215 aa).

Residues 39-107 (VRQYLQKRLA…PVHINIEEIR (69 aa)) form the KH type-2 domain.

It belongs to the universal ribosomal protein uS3 family. As to quaternary structure, part of the 30S ribosomal subunit. Forms a tight complex with proteins S10 and S14.

Its function is as follows. Binds the lower part of the 30S subunit head. Binds mRNA in the 70S ribosome, positioning it for translation. The chain is Small ribosomal subunit protein uS3 from Nitrosomonas eutropha (strain DSM 101675 / C91 / Nm57).